Here is a 170-residue protein sequence, read N- to C-terminus: Cytochrome c-type biogenesis protein CcmE (170 aa).

The Cytoplasmic portion of the chain corresponds to 1–7 (MTRKQRR). The chain crosses the membrane as a helical; Signal-anchor for type II membrane protein span at residues 8 to 28 (LTIIGGALFVLAVAAGLVLNA). The Periplasmic segment spans residues 29–170 (LRDSIVFFST…GEKTAAGATQ (142 aa)). Positions 122 and 126 each coordinate heme. The span at 137 to 146 (KQGHWKDDYG) shows a compositional bias: basic and acidic residues. The tract at residues 137 to 170 (KQGHWKDDYGKPQAAKPGPVSMREGEKTAAGATQ) is disordered.

This sequence belongs to the CcmE/CycJ family.

It is found in the cell inner membrane. Its function is as follows. Heme chaperone required for the biogenesis of c-type cytochromes. Transiently binds heme delivered by CcmC and transfers the heme to apo-cytochromes in a process facilitated by CcmF and CcmH. The polypeptide is Cytochrome c-type biogenesis protein CcmE (Bradyrhizobium sp. (strain BTAi1 / ATCC BAA-1182)).